A 158-amino-acid polypeptide reads, in one-letter code: Large ribosomal subunit protein uL15 (158 aa).

The protein belongs to the universal ribosomal protein uL15 family. In terms of assembly, part of the 50S ribosomal subunit.

In terms of biological role, binds to the 23S rRNA. The chain is Large ribosomal subunit protein uL15 from Aeropyrum pernix (strain ATCC 700893 / DSM 11879 / JCM 9820 / NBRC 100138 / K1).